Here is a 546-residue protein sequence, read N- to C-terminus: Major facilitator superfamily transporter MPN_077 (546 aa).

The next 12 membrane-spanning stretches (helical) occupy residues 2 to 22 (WGLV…IDFI), 62 to 82 (WTIT…VVKF), 88 to 108 (VMIM…GSPL), 179 to 199 (AFFI…IAYA), 220 to 240 (FWGF…PGVG), 248 to 268 (VWVV…FAWF), 305 to 325 (LLAI…QTWF), 344 to 364 (PILL…LSPF), 377 to 397 (FIFT…ATLG), 401 to 421 (VVGF…GWSL), 442 to 462 (IIFG…DIIT), and 485 to 505 (IAAI…IIYL).

This sequence belongs to the major facilitator superfamily.

It is found in the cell membrane. This is Major facilitator superfamily transporter MPN_077 from Mycoplasma pneumoniae (strain ATCC 29342 / M129 / Subtype 1) (Mycoplasmoides pneumoniae).